The sequence spans 339 residues: Nicotinate-nucleotide--dimethylbenzimidazole phosphoribosyltransferase (339 aa).

The Proton acceptor role is filled by Glu306.

This sequence belongs to the CobT family.

It carries out the reaction 5,6-dimethylbenzimidazole + nicotinate beta-D-ribonucleotide = alpha-ribazole 5'-phosphate + nicotinate + H(+). It functions in the pathway nucleoside biosynthesis; alpha-ribazole biosynthesis; alpha-ribazole from 5,6-dimethylbenzimidazole: step 1/2. Functionally, catalyzes the synthesis of alpha-ribazole-5'-phosphate from nicotinate mononucleotide (NAMN) and 5,6-dimethylbenzimidazole (DMB). The protein is Nicotinate-nucleotide--dimethylbenzimidazole phosphoribosyltransferase of Brucella canis (strain ATCC 23365 / NCTC 10854 / RM-666).